Reading from the N-terminus, the 483-residue chain is NADH-quinone oxidoreductase subunit N (483 aa).

13 helical membrane-spanning segments follow: residues 11-31, 37-57, 82-100, 110-130, 164-184, 205-225, 239-259, 268-288, 301-321, 329-349, 372-392, 406-426, and 446-466; these read ALPE…DLFL, SLIY…TACT, LMMY…QYVS, FALT…QHFL, FVLG…LYGV, AVLV…LGAV, PTAV…AFMI, VLAI…ILIG, MLAY…MSAG, MFYI…MLLL, YAFL…TLGF, GFVG…FYYL, and PIDM…LGMF.

This sequence belongs to the complex I subunit 2 family. NDH-1 is composed of 14 different subunits. Subunits NuoA, H, J, K, L, M, N constitute the membrane sector of the complex.

The protein localises to the cell inner membrane. The enzyme catalyses a quinone + NADH + 5 H(+)(in) = a quinol + NAD(+) + 4 H(+)(out). NDH-1 shuttles electrons from NADH, via FMN and iron-sulfur (Fe-S) centers, to quinones in the respiratory chain. The immediate electron acceptor for the enzyme in this species is believed to be ubiquinone. Couples the redox reaction to proton translocation (for every two electrons transferred, four hydrogen ions are translocated across the cytoplasmic membrane), and thus conserves the redox energy in a proton gradient. The polypeptide is NADH-quinone oxidoreductase subunit N (Methylovorus glucosotrophus (strain SIP3-4)).